A 260-amino-acid polypeptide reads, in one-letter code: Ribosomal RNA small subunit methyltransferase G (260 aa).

Residues glycine 94, phenylalanine 99, 117 to 119 (DSS), 145 to 146 (AE), and arginine 164 each bind S-adenosyl-L-methionine.

This sequence belongs to the methyltransferase superfamily. RNA methyltransferase RsmG family.

It localises to the cytoplasm. Functionally, specifically methylates the N7 position of a guanine in 16S rRNA. The chain is Ribosomal RNA small subunit methyltransferase G from Synechococcus sp. (strain JA-3-3Ab) (Cyanobacteria bacterium Yellowstone A-Prime).